Consider the following 243-residue polypeptide: uncharacterized protein (243 aa).

The N-terminal stretch at 1 to 16 (MKLLALVALCAVGVAS) is a signal peptide. N55 is a glycosylation site (N-linked (GlcNAc...) asparagine). Disordered stretches follow at residues 95-126 (SQGRNQQQQSNDVSSQGGNDDGSIPKAPEKPS) and 208-235 (NQQQQRQQPSSTTPASTSSTTLPPKPTV). 2 stretches are compositionally biased toward low complexity: residues 99–112 (NQQQQSNDVSSQGG) and 209–229 (QQQQRQQPSSTTPASTSSTTL). C141 and C239 are disulfide-bonded.

The protein belongs to the protease inhibitor I33 family.

It is found in the secreted. This is an uncharacterized protein from Caenorhabditis elegans.